A 660-amino-acid polypeptide reads, in one-letter code: MEHIRTPKVENVRLVDRVSCKKAALGTLYLTATHVIFVENAPDTRKETWILHSQISTIEKQATTATGCPLLIRCKNFQIVQLVIPQERDCHDVYISLIRLARPVKYEELYCFSFNPKLDKEEREQGWLLVDLSEEYKRMGLPDNYWQLSDVNRDYRVCDSYPTELYVPRSATAHIIVGSSKFRSRRRFPALSYYCKDSHASICRSSQPLSGFSARCLEDEQMLQAIRKANPGSDFIYVVDTRPKLNAMANRAAGKGYENEDNYSNIKFQFIGIENIHVMRNSLQKMLEVCELKSPSMSDFLWGLENSGWLRHIKAIMDAGIFIAKAVSEEGASVLVHCSDGWDRTAQVCSVASLLLDPYYRTLKGFMVLIEKDWISFGHKFNHRYGNLDGDPKEISPVIDQFIECVWQLTEQFPCAFEFNERFLTHIQHHVYSCQFGNFLCNSQKERRELKIQERTYSLWSNLWKNRADYLNPLFRADHSQTQGSLHLPTAPCNFTYKFWNGMYNRFEKGLQPRQSVTDYLMAVKEESQQLEEELESLEERLEKIQKVHLHGTKVKSKQSEPSKHSGFSTSDHSTANTPQDYSGNSKSFPSRSPSQGDEDSALILTQDNLKSSDPDLSVNSDQESGVEDLSCRSPSGGEHAPSEDSGKDRDSDEAVFLTA.

The region spanning 126–504 (GWLLVDLSEE…FTYKFWNGMY (379 aa)) is the Myotubularin phosphatase domain. A 1,2-diacyl-sn-glycero-3-phospho-(1D-myo-inositol-3-phosphate) is bound by residues Asn-250, Asn-275, and Ile-276. The active-site Phosphocysteine intermediate is Cys-338. 7 residues coordinate a 1,2-diacyl-sn-glycero-3-phospho-(1D-myo-inositol-3-phosphate): Ser-339, Asp-340, Gly-341, Trp-342, Asp-343, Arg-344, and Arg-384. Residues 514 to 548 (RQSVTDYLMAVKEESQQLEEELESLEERLEKIQKV) adopt a coiled-coil conformation. The disordered stretch occupies residues 550–660 (LHGTKVKSKQ…DSDEAVFLTA (111 aa)). The span at 566-596 (SGFSTSDHSTANTPQDYSGNSKSFPSRSPSQ) shows a compositional bias: polar residues. Thr-578 carries the post-translational modification Phosphothreonine. The segment covering 641–653 (APSEDSGKDRDSD) has biased composition (basic and acidic residues).

Belongs to the protein-tyrosine phosphatase family. Non-receptor class myotubularin subfamily. Heterodimer (via C-terminus) with MTMR9 (via coiled coil domain); the interaction enhances MTMR7 catalytic activity. Does not homodimerize. Interacts with RAB1B (in GDP-bound form). As to expression, highly expressed in brain (at protein level). Expressed at low levels in liver, kidney and testis.

The protein resides in the cytoplasm. It localises to the endomembrane system. It catalyses the reaction a 1,2-diacyl-sn-glycero-3-phospho-(1D-myo-inositol-3-phosphate) + H2O = a 1,2-diacyl-sn-glycero-3-phospho-(1D-myo-inositol) + phosphate. The catalysed reaction is 1D-myo-inositol 1,3-bisphosphate + H2O = 1D-myo-inositol 1-phosphate + phosphate. Interaction with MTMR9 increases phosphatase activity. Its function is as follows. Lipid phosphatase that specifically dephosphorylates the D-3 position of phosphatidylinositol 3-phosphate (PtdIns(3)P) and inositol 1,3-bisphosphate (Ins(1,3)P2). This chain is Phosphatidylinositol-3-phosphate phosphatase MTMR7, found in Mus musculus (Mouse).